An 815-amino-acid polypeptide reads, in one-letter code: cGMP-specific 3',5'-cyclic phosphodiesterase delta (815 aa).

At 1-56 (MNEYNNDNMEQEKEKKKEEQKYKNIIKKEYFIFPRLYDKNKEIEYNKLRIHNIKEY) the chain is on the cytoplasmic side. The chain crosses the membrane as a helical span at residues 57–77 (ICIHLTISLFIILIECFVFSF). The Extracellular segment spans residues 78-86 (NLNIKDTTY). The helical transmembrane segment at 87–107 (VEICVVIFSILNCLMHIVVLI) threads the bilayer. The Cytoplasmic portion of the chain corresponds to 108–120 (KMYFFTSESVYTK). The helical transmembrane segment at 121–141 (GVFIGYIVLNQVFQFLSLYFF) threads the bilayer. Over 142–160 (TKRNEQSKNDIAHLKYYDN) the chain is Extracellular. The helical transmembrane segment at 161 to 181 (SFNLYVHFFVDSVFILCLPAL) threads the bilayer. Topologically, residues 182-183 (SF) are cytoplasmic. A helical transmembrane segment spans residues 184-204 (FLSVLFMMMFLCLNILLINMI). At 205 to 210 (KFNKTN) the chain is on the extracellular side. Asn-207 carries N-linked (GlcNAc...) asparagine glycosylation. A helical membrane pass occupies residues 211-231 (YGSDIYHICLLSVVLLMFLIL). The Cytoplasmic segment spans residues 232 to 815 (RYMMEERNRL…FKEEIKHGKL (584 aa)). In terms of domain architecture, PDEase spans 384-762 (YEVEVLKNIK…QTWRLIEKNI (379 aa)). Catalysis depends on His-459, which acts as the Proton donor. 459–463 (HNANH) lines the 3',5'-cyclic GMP pocket. His-463, His-499, Asp-500, and Asp-616 together coordinate a divalent metal cation. Residues Asp-500, Asp-616, and Gln-715 each coordinate 3',5'-cyclic GMP.

It belongs to the cyclic nucleotide phosphodiesterase family. The cofactor is a divalent metal cation.

Its subcellular location is the membrane. The enzyme catalyses 3',5'-cyclic GMP + H2O = GMP + H(+). It functions in the pathway purine metabolism; 3',5'-cyclic GMP degradation; GMP from 3',5'-cyclic GMP: step 1/1. In terms of biological role, specifically hydrolyzes the second messenger cGMP, which is a key regulator of many important physiological processes. Probably by regulating cGMP levels, required for activation of gametogenesis. The sequence is that of cGMP-specific 3',5'-cyclic phosphodiesterase delta from Plasmodium falciparum (isolate 3D7).